Reading from the N-terminus, the 112-residue chain is MTALTQMKCEACQADAPKVTDAELAELIRMIPDWGVQVRDGIMQLERVYKFKNFKLAMAFTNKLAELAEEEFHHPGILTEWGKVTVTWWSHSIKGLHKNDFIMAAKTDQLLD.

The protein belongs to the pterin-4-alpha-carbinolamine dehydratase family.

The catalysed reaction is (4aS,6R)-4a-hydroxy-L-erythro-5,6,7,8-tetrahydrobiopterin = (6R)-L-erythro-6,7-dihydrobiopterin + H2O. This is Putative pterin-4-alpha-carbinolamine dehydratase from Shewanella sp. (strain MR-7).